The chain runs to 266 residues: Gasdermin bGSDM (266 aa).

The next 4 beta stranded transmembrane spans lie at phenylalanine 65–leucine 81, glutamate 93–glutamate 113, glutamine 162–valine 181, and alanine 187–threonine 203. The interval glycine 248–leucine 266 is C-terminal region.

It belongs to the bacterial gasdermin family. In terms of assembly, monomer. Forms large, homooligomeric ring-shaped pores when inserted in membranes.

The protein resides in the cytoplasm. It is found in the cell membrane. Its activity is regulated as follows. The full-length protein before cleavage is inactive: intramolecular interactions between the N-terminal domain and the C-terminal region mediate autoinhibition. The pyroptosis-like-inducing activity is carried by the released N-terminal domain (Gasdermin bGSDM, N-terminus). Its function is as follows. Precursor of a pore-forming protein involved in defense against bacteriophages. Cleavage of this precursor by its dedicated protease releases the active moiety (gasdermin bGSDM, N-terminus) which inserts into membranes, forming pores and triggering cell death. Expression of bGSDM and the neighboring protease gene (Ga0307981_100051430) is highly toxic in E.coli. Pore-forming protein that causes membrane permeabilization via a pyroptosis-like activity. This is the active form which makes ring-like pores with an interior pore diameter of 130-190 Angstroms, when integrated in liposomes. The sequence is that of Gasdermin bGSDM from Unknown prokaryotic organism.